A 2324-amino-acid polypeptide reads, in one-letter code: Serine/threonine-protein kinase MEC1 (2324 aa).

In terms of domain architecture, FAT spans 1349 to 1901 (VLAQKSLETN…LWYITVLLNS (553 aa)). In terms of domain architecture, PI3K/PI4K catalytic spans 2005 to 2308 (FTPHYKVYSS…QVDTVVQQAS (304 aa)). A G-loop region spans residues 2011-2017 (VYSSLKK). A catalytic loop region spans residues 2177–2185 (GLGDRHLEN). The interval 2197–2221 (HVDFDCLFEKGKTLPVPEIVPFRLT) is activation loop. The FATC domain occupies 2292–2324 (LPLSVPGQVDTVVQQASSDENLAQMYIGWLPFW).

This sequence belongs to the PI3/PI4-kinase family. ATM subfamily.

It is found in the nucleus. The enzyme catalyses L-seryl-[protein] + ATP = O-phospho-L-seryl-[protein] + ADP + H(+). It carries out the reaction L-threonyl-[protein] + ATP = O-phospho-L-threonyl-[protein] + ADP + H(+). Its function is as follows. Serine/threonine protein kinase which activates checkpoint signaling upon genotoxic stresses such as ionizing radiation (IR), ultraviolet light (UV), or DNA replication stalling, thereby acting as a DNA damage sensor. Recognizes the substrate consensus sequence [ST]-Q. Recruited to DNA lesions in order to initiate the DNA repair by homologous recombination. Phosphorylates histone H2A to form H2AS128ph (gamma-H2A) at sites of DNA damage, also involved in the regulation of DNA damage response mechanism. Required for cell growth and meiotic recombination. In Eremothecium gossypii (strain ATCC 10895 / CBS 109.51 / FGSC 9923 / NRRL Y-1056) (Yeast), this protein is Serine/threonine-protein kinase MEC1 (MEC1).